We begin with the raw amino-acid sequence, 2440 residues long: Nuclear receptor corepressor 1 (2440 aa).

The span at 1–18 (MSSSGYPPNQGAFSTEQS) shows a compositional bias: polar residues. Disordered regions lie at residues 1 to 177 (MSSS…SKLS) and 206 to 231 (QQQL…VEQK). Residues 1-373 (MSSSGYPPNQ…QRGAGLSATI (373 aa)) are interaction with ZBTB33 and HEXIM1. Positions 51-64 (SQASQLLQQQQQQQ) are enriched in low complexity. Composition is skewed to basic and acidic residues over residues 77–88 (PGSDRPQERRTS), 99–119 (VDHD…DSHF), and 141–155 (ADAK…KHEA). Serine 172 is subject to Phosphoserine. Positions 174–216 (SKLSKEELIQSMDRVDREIAKVEQQILKLKKKQQQLEEEAAKP) form a coiled coil. A compositionally biased stretch (basic and acidic residues) spans 212 to 221 (EAAKPPEPEK). A Phosphoserine modification is found at serine 224. The segment at 254 to 312 (FEGLGPKVELPLYNQPSDTKVYHENIKTNQVMRKKLILFFKRRNHARKQREQKICQRYD) is interaction with SIN3A/B. Positions 299–328 (ARKQREQKICQRYDQLMEAWEKKVDRIENN) form a coiled coil. The SANT 1 domain maps to 435–486 (QFMNVWTDHEKEIFKDKFIQHPKNFGLIASYLERKSVPDCVLYYYLTKKNEN). Disordered stretches follow at residues 497–632 (KRRG…TEEE) and 677–915 (NLLQ…GSIL). Positions 501–557 (RNQQIARPSQEEKVEEKEEDKAEKTEKKEEEKKDEEEKDEKEDSKENTKEKDKIDGT) form a coiled coil. 2 stretches are compositionally biased toward basic and acidic residues: residues 509–531 (SQEE…KEEE) and 541–556 (KEDS…KIDG). The span at 592–605 (EAAAASAAAAAATE) shows a compositional bias: low complexity. A compositionally biased stretch (pro residues) spans 606 to 617 (EPPPPLPPPPEP). The SANT 2 domain maps to 623-674 (VETSRWTEEEMEVAKKGLVEHGRNWAAIAKMVGTKSEAQCKNFYFNYKRRHN). The span at 698–708 (QCESVASTVSA) shows a compositional bias: polar residues. The span at 709–728 (QEDEDIEASNEEENPEDSEV) shows a compositional bias: acidic residues. Positions 752–768 (ELEPTTETAPSTSPSLA) are enriched in low complexity. Polar residues predominate over residues 781–792 (ETQVNDSISAET). A compositionally biased stretch (basic and acidic residues) spans 820 to 859 (DSVDVEVRVPENHASKVEGDNTKERDLDRASEKVEPRDED). 2 stretches are compositionally biased toward polar residues: residues 864 to 883 (QQIN…SATC) and 906 to 915 (SLLNPTGSIL). The interaction with ETO stretch occupies residues 988–1816 (RSSTSPCGTS…QGLPASRYNT (829 aa)). Phosphoserine is present on serine 999. The disordered stretch occupies residues 1022 to 1046 (VRLPTTRPTRPPPPLIPSSKTTVAS). A Glycyl lysine isopeptide (Lys-Gly) (interchain with G-Cter in SUMO1); alternate cross-link involves residue lysine 1106. Lysine 1106 is covalently cross-linked (Glycyl lysine isopeptide (Lys-Gly) (interchain with G-Cter in SUMO2); alternate). A Phosphoserine modification is found at serine 1111. Lysine 1184 is covalently cross-linked (Glycyl lysine isopeptide (Lys-Gly) (interchain with G-Cter in SUMO2)). Residues 1184–1204 (KGSISRMPIEDSSPEKGREEA) are disordered. Residues serine 1195, serine 1196, serine 1249, serine 1263, serine 1281, and serine 1322 each carry the phosphoserine modification. Position 1336 is an N6-acetyllysine (lysine 1336). The residue at position 1367 (threonine 1367) is a Phosphothreonine. Lysine 1389 participates in a covalent cross-link: Glycyl lysine isopeptide (Lys-Gly) (interchain with G-Cter in SUMO2). Residue lysine 1412 forms a Glycyl lysine isopeptide (Lys-Gly) (interchain with G-Cter in SUMO2); alternate linkage. Lysine 1412 is subject to N6-acetyllysine; alternate. Residues 1440–1459 (AGETVRSRHTSVVSSGPSVL) form a disordered region. A phosphoserine mark is found at serine 1450 and serine 1472. Residues 1488-1512 (YQNTMSRGSPMMNRTSDVTISSNKS) are compositionally biased toward polar residues. Residues 1488 to 1554 (YQNTMSRGSP…SPFDPHHRGS (67 aa)) form a disordered region. An interaction with C1D region spans residues 1501 to 2440 (RTSDVTISSN…QYETLSDSDD (940 aa)). Lysine 1518 is covalently cross-linked (Glycyl lysine isopeptide (Lys-Gly) (interchain with G-Cter in SUMO2)). Serine 1592 carries the phosphoserine modification. 2 disordered regions span residues 1690–1759 (PRPY…SPSP) and 1884–1922 (SSAF…LRTR). 2 stretches are compositionally biased toward basic and acidic residues: residues 1712–1729 (AERE…RERI) and 1903–1921 (AGKD…ELRT). Residues 1933–1937 (IDVII) carry the CORNR box 1 motif. Residues 1943 to 1969 (SDKDARERGSQSSDSSSSLSSHRYETP) form a disordered region. A compositionally biased stretch (low complexity) spans 1952–1963 (SQSSDSSSSLSS). Serine 1977 and serine 1981 each carry phosphoserine. A disordered region spans residues 2006-2041 (PTRQYEGPLHHYRPQQESPSPQQQLPPSSQAEGMGQ). Positions 2020–2035 (QQESPSPQQQLPPSSQ) are enriched in low complexity. The tract at residues 2032–2115 (PSSQAEGMGQ…QAQSVHHQRP (84 aa)) is ID1. Positions 2047–2050 (RLIT) are required for interaction with RARA in the absence of its ligand. A CORNR box 2 motif is present at residues 2055 to 2059 (ICQII). The segment covering 2067–2086 (QVSSQTPQQPPTSTFQNSPS) has biased composition (low complexity). Positions 2067 to 2155 (QVSSQTPQQP…PYEPISPPQV (89 aa)) are disordered. Over residues 2087-2110 (ALVSTPVRTKTSNRYSPESQAQSV) the composition is skewed to polar residues. Phosphoserine is present on residues serine 2102, serine 2120, serine 2136, serine 2151, and serine 2184. The span at 2124-2142 (LVDKSRGSRPGKSPERSHV) shows a compositional bias: basic and acidic residues. An ID2 region spans residues 2212–2273 (IFRKLNSSGG…EDIIRKALMG (62 aa)). Positions 2263–2267 (LEDII) match the CORNR box 3 motif. Positions 2287–2440 (SQPMGVVPGT…QYETLSDSDD (154 aa)) are disordered. The span at 2296–2305 (TANTSVVTSG) shows a compositional bias: polar residues. Position 2399 is a phosphothreonine (threonine 2399). Polar residues-rich tracts occupy residues 2407 to 2418 (AVNQAAPHQQNR) and 2431 to 2440 (QYETLSDSDD). Phosphoserine is present on residues serine 2436 and serine 2438.

This sequence belongs to the N-CoR nuclear receptor corepressors family. In terms of assembly, forms a large corepressor complex that contains SIN3A/B and histone deacetylases HDAC1 and HDAC2. This complex associates with the thyroid receptor (TR) and the retinoid acid receptor (RAR) in the absence of ligand. Interacts directly with RARA; the interaction is facilitated with RARA trimethylation. Component of the N-Cor repressor complex, at least composed of CBFA2T3, HEXIM1, NCOR1, NCOR2, HDAC3, TBL1X, TBL1XR1, CORO2A and GPS2. Interacts with ZBTB33; the interaction serves to recruit the N-CoR complex to promoter regions containing methylated CpG dinucleotides. Interacts with TRIM28 and KDM3A. Interacts (via the RD1 domain) with BAZ1A (via its N-terminal); the interaction corepresses a number of NCOR1-regulated genes. Interacts with BCL6, C1D, DACH1, HEXIM1, HDAC7, RORA, RORC, SAP30, SIAH2, SIN3A and SIN3B. May interact with DEAF1. Interacts with RXRA. Interacts with SETD5. Interacts with VDR. Interacts with ZBTB7A. Interacts with AR. Interacts with HDAC3. Ubiquitinated; mediated by SIAH2 and leading to its subsequent proteasomal degradation.

Its subcellular location is the nucleus. In terms of biological role, mediates transcriptional repression by certain nuclear receptors. Part of a complex which promotes histone deacetylation and the formation of repressive chromatin structures which may impede the access of basal transcription factors. Participates in the transcriptional repressor activity produced by BCL6. Recruited by ZBTB7A to the androgen response elements/ARE on target genes, negatively regulates androgen receptor signaling and androgen-induced cell proliferation. Mediates the NR1D1-dependent repression and circadian regulation of TSHB expression. The NCOR1-HDAC3 complex regulates the circadian expression of the core clock gene ARTNL/BMAL1 and the genes involved in lipid metabolism in the liver. The polypeptide is Nuclear receptor corepressor 1 (NCOR1) (Homo sapiens (Human)).